Reading from the N-terminus, the 143-residue chain is Transcription antitermination protein NusB (143 aa).

Belongs to the NusB family.

Functionally, involved in transcription antitermination. Required for transcription of ribosomal RNA (rRNA) genes. Binds specifically to the boxA antiterminator sequence of the ribosomal RNA (rrn) operons. This chain is Transcription antitermination protein NusB, found in Anaeromyxobacter sp. (strain Fw109-5).